The sequence spans 117 residues: UPF0251 protein DehaBAV1_0135 (117 aa).

Belongs to the UPF0251 family.

The polypeptide is UPF0251 protein DehaBAV1_0135 (Dehalococcoides mccartyi (strain ATCC BAA-2100 / JCM 16839 / KCTC 5957 / BAV1)).